The primary structure comprises 1275 residues: Myosin-1 (1275 aa).

A Myosin motor domain is found at 35 to 727 (VGVSDLTLLS…TLFAMEDMRD (693 aa)). 128-135 (GESGAGKT) is an ATP binding site. S361 carries the post-translational modification Phosphoserine. Residues 410–493 (TIGILDIYGF…PGLFAALNDS (84 aa)) form an actin-binding region. IQ domains are found at residues 731-751 (HNMA…KEDA) and 752-777 (ARLI…YGNG). In terms of domain architecture, TH1 spans 785-974 (RRRMSMLGSR…KSGTVSVRPG (190 aa)). Disordered regions lie at residues 966 to 1064 (SGTV…LNNN), 1089 to 1128 (QNHN…AKPK), 1183 to 1230 (SECP…GGLS), and 1251 to 1275 (IADA…DDDW). The span at 977–992 (PDSQNPKRPRATSSKV) shows a compositional bias: polar residues. Low complexity predominate over residues 1095–1106 (PTAPSRPAKKAA). Over residues 1107–1121 (PAPPVKKTAPPPPPS) the composition is skewed to pro residues. Positions 1127–1187 (PKWPTFKANY…PTAYISECPP (61 aa)) constitute an SH3 domain. The span at 1254–1263 (ALKKRSATRD) shows a compositional bias: basic and acidic residues. A compositionally biased stretch (acidic residues) spans 1264-1275 (SDDEEEDDDDDW).

Belongs to the TRAFAC class myosin-kinesin ATPase superfamily. Myosin family. Phosphorylation of the TEDS site (Ser-361) is required for the polarization of the actin cytoskeleton. Phosphorylation probably activates the myosin-I ATPase activity.

The protein localises to the cytoplasm. Its subcellular location is the cytoskeleton. It is found in the actin patch. Type-I myosin implicated in the organization of the actin cytoskeleton. Required for proper actin cytoskeleton polarization. At the cell cortex, assembles in patch-like structures together with proteins from the actin-polymerizing machinery and promotes actin assembly. Functions as actin nucleation-promoting factor (NPF) for the Arp2/3 complex. In Meyerozyma guilliermondii (strain ATCC 6260 / CBS 566 / DSM 6381 / JCM 1539 / NBRC 10279 / NRRL Y-324) (Yeast), this protein is Myosin-1 (MYO1).